Here is a 316-residue protein sequence, read N- to C-terminus: Methionyl-tRNA formyltransferase (316 aa).

112–115 is a (6S)-5,6,7,8-tetrahydrofolate binding site; the sequence is SLLP.

This sequence belongs to the Fmt family.

It catalyses the reaction L-methionyl-tRNA(fMet) + (6R)-10-formyltetrahydrofolate = N-formyl-L-methionyl-tRNA(fMet) + (6S)-5,6,7,8-tetrahydrofolate + H(+). Attaches a formyl group to the free amino group of methionyl-tRNA(fMet). The formyl group appears to play a dual role in the initiator identity of N-formylmethionyl-tRNA by promoting its recognition by IF2 and preventing the misappropriation of this tRNA by the elongation apparatus. This Actinobacillus pleuropneumoniae serotype 5b (strain L20) protein is Methionyl-tRNA formyltransferase.